Here is a 179-residue protein sequence, read N- to C-terminus: Large ribosomal subunit protein uL5 (179 aa).

It belongs to the universal ribosomal protein uL5 family. As to quaternary structure, part of the 50S ribosomal subunit; part of the 5S rRNA/L5/L18/L25 subcomplex. Contacts the 5S rRNA and the P site tRNA. Forms a bridge to the 30S subunit in the 70S ribosome.

In terms of biological role, this is one of the proteins that bind and probably mediate the attachment of the 5S RNA into the large ribosomal subunit, where it forms part of the central protuberance. In the 70S ribosome it contacts protein S13 of the 30S subunit (bridge B1b), connecting the 2 subunits; this bridge is implicated in subunit movement. Contacts the P site tRNA; the 5S rRNA and some of its associated proteins might help stabilize positioning of ribosome-bound tRNAs. This is Large ribosomal subunit protein uL5 from Staphylococcus haemolyticus (strain JCSC1435).